The primary structure comprises 729 residues: MSCCDLAAAGQLGKAGIMASDCEPALNQAESRNPTLERYLGALREAKNDSEQFAALLLVTKAVKAGDIDAKTRRRIFDAVGFTFPNRLLTTKEAPDGCPDHVLRALGVALLACFCSDPELASHPQVLNKIPILSTFLTARGDPDDAARRSMIDDTYQCLTAVAGTPRGPRHLIAGGTVSALCQAYLGHGYGFDQALALLVGLLAAAETQCWKEAEPDLLAVLRGLSEDFQRAEDASKFELCQLLPLFLPPTTVPPECHRDLQAGLARILGSKLSSWQRNPALKLAARLAHACGSDWIPVGSSGSKFLALLVNLACVEVRLALEETGTEVKEDVVTACYALMELGIQECTRCEQSLLKEPQKVQLVSIMKEAIGAVIHYLLQVGPEKQKEPFVFASVRILGAWLAEETSSLRKEVCQLLPFLVRYAKTLYEEAEEASDISQQVANLAISPTTPGPSWPGDALRLLLPGWCHLTVEDGPREILIKEGAPSLLCKYFLQQWELTSPGHDTSVLPDSVEIGLQTCCHIFLNLVVTAPGLIKRDACFTSLMNTLMTSLPSLVQQQGRLLLAANVATLGLLMARLLSTSPALQGTPASRGFFAAAILFLSQSHVARATPGSDQAVLALSPDYEGIWADLQELWFLGMQAFTGCVPLLPWLAPAALRSRWPQELLQLLGSVSPNSVKPEMVAAYQGVLVELARANRLCREAMRLQAGEETASHYRMAALEQCLSEP.

At serine 2 the chain carries N-acetylserine. Serine 2 carries the post-translational modification Phosphoserine. 2 S-palmitoyl cysteine lipidation sites follow: cysteine 3 and cysteine 4. Arginine 75 bears the Asymmetric dimethylarginine mark. The residue at position 448 (serine 448) is a Phosphoserine.

This sequence belongs to the neurochondrin family. In terms of assembly, interacts with MCHR1. Interacts with SEMA4C. Interacts with DIAPH1 (via FH3 domain). Interacts with GRM5. Palmitoylated. Palmitoylation by ZDHHC1, ZDHHC3 and ZDHHC11 regulates the association of NCDN with endosome membranes. May also be palmitoylated by ZDHHC7. In terms of tissue distribution, expressed in the neuronal, chondral and bone tissues. Expressed in dendrites. Enriched in the brain in the surface layer I-IV. In brains, protein level increases in male but decreases in female with advancing age (at protein level). In adult brains, it is highly expressed in the forebrain and hindbrain. Highly expressed in the hippocampus, piriform cortex, septum, amygdaloid complex, medial geniculate nucleus, inferior colliculus, cerebellar nuclei and the nuclei of the Vth, VIIth, and XIIth cranial nerves. In bone tissues, it is expressed in osteoblasts and osteocytes.

It localises to the cytoplasm. The protein resides in the cytosol. The protein localises to the endosome membrane. It is found in the cell projection. Its subcellular location is the dendrite. It localises to the postsynapse. Functionally, probably involved in signal transduction, in the nervous system, via increasing cell surface localization of GRM5 and positively regulating its signaling. Required for the spatial learning process. Acts as a negative regulator of Ca(2+)-calmodulin-dependent protein kinase 2 (CaMK2) phosphorylation. May play a role in modulating melanin-concentrating hormone-mediated functions via its interaction with MCHR1 that interferes with G protein-coupled signal transduction. May be involved in bone metabolism. May also be involved in neurite outgrowth. The polypeptide is Neurochondrin (Ncdn) (Mus musculus (Mouse)).